The chain runs to 407 residues: Magnesium-protoporphyrin IX monomethyl ester [oxidative] cyclase 1, chloroplastic (407 aa).

Over residues 1–10 (MQTTLKQQRA) the composition is skewed to polar residues. Residues 1 to 28 (MQTTLKQQRASGRVSARQPFRSAAVARP) are disordered.

This sequence belongs to the AcsF family. Fe cation is required as a cofactor.

The protein localises to the plastid. Its subcellular location is the chloroplast thylakoid membrane. It carries out the reaction Mg-protoporphyrin IX 13-monomethyl ester + 3 NADPH + 3 O2 + 2 H(+) = 3,8-divinyl protochlorophyllide a + 3 NADP(+) + 5 H2O. It participates in porphyrin-containing compound metabolism; chlorophyll biosynthesis. Functionally, catalyzes the formation of the isocyclic ring in chlorophyll biosynthesis under oxygen- and copper-deficient conditions. Mediates the cyclase reaction, which results in the formation of divinylprotochlorophyllide (Pchlide) characteristic of all chlorophylls from magnesium-protoporphyrin IX 13-monomethyl ester (MgPMME). The protein is Magnesium-protoporphyrin IX monomethyl ester [oxidative] cyclase 1, chloroplastic (CRD1) of Chlamydomonas reinhardtii (Chlamydomonas smithii).